The following is a 386-amino-acid chain: Delta(7)-sterol 5(6)-desaturase (386 aa).

The next 3 membrane-spanning stretches (helical) occupy residues 119-139 (VLSL…IVAY), 172-192 (IPVM…GYSF), and 206-226 (AILW…YFLH). Positions 214–337 (FILFTDCGIY…FTTLWDRLGN (124 aa)) constitute a Fatty acid hydroxylase domain. Residues 226–230 (HRWLH) carry the Histidine box-1 motif. A Histidine box-2 motif is present at residues 239 to 243 (HKPHH). The helical transmembrane segment at 272-292 (PLLFPLHKVLYLLLFTFVNFW) threads the bilayer. A Histidine box-3 motif is present at residues 314–318 (HTVHH).

It belongs to the sterol desaturase family. Requires Fe cation as cofactor.

Its subcellular location is the endoplasmic reticulum membrane. It catalyses the reaction a Delta(7)-sterol + 2 Fe(II)-[cytochrome b5] + O2 + 2 H(+) = a Delta(5),Delta(7)-sterol + 2 Fe(III)-[cytochrome b5] + 2 H2O. Its pathway is steroid metabolism; ergosterol biosynthesis; ergosterol from zymosterol: step 3/5. In terms of biological role, catalyzes the introduction of a C-5 double bond in the B ring of ergosterol. May contribute to the regulation of ergosterol biosynthesis. The chain is Delta(7)-sterol 5(6)-desaturase (ERG3) from Candida dubliniensis (strain CD36 / ATCC MYA-646 / CBS 7987 / NCPF 3949 / NRRL Y-17841) (Yeast).